Consider the following 208-residue polypeptide: Imidazoleglycerol-phosphate dehydratase (208 aa).

It belongs to the imidazoleglycerol-phosphate dehydratase family.

The protein localises to the cytoplasm. It catalyses the reaction D-erythro-1-(imidazol-4-yl)glycerol 3-phosphate = 3-(imidazol-4-yl)-2-oxopropyl phosphate + H2O. It functions in the pathway amino-acid biosynthesis; L-histidine biosynthesis; L-histidine from 5-phospho-alpha-D-ribose 1-diphosphate: step 6/9. This Prochlorococcus marinus (strain MIT 9211) protein is Imidazoleglycerol-phosphate dehydratase.